Consider the following 525-residue polypeptide: Light-independent protochlorophyllide reductase subunit B (525 aa).

Residue Asp36 participates in [4Fe-4S] cluster binding. Catalysis depends on Asp292, which acts as the Proton donor. 428–429 (GL) contributes to the substrate binding site. The segment at 447–470 (PSASSENGSAPLSAGTATPAAAPE) is disordered. A compositionally biased stretch (low complexity) spans 460–470 (AGTATPAAAPE).

The protein belongs to the ChlB/BchB/BchZ family. As to quaternary structure, protochlorophyllide reductase is composed of three subunits; BchL, BchN and BchB. Forms a heterotetramer of two BchB and two BchN subunits. [4Fe-4S] cluster serves as cofactor.

The catalysed reaction is chlorophyllide a + oxidized 2[4Fe-4S]-[ferredoxin] + 2 ADP + 2 phosphate = protochlorophyllide a + reduced 2[4Fe-4S]-[ferredoxin] + 2 ATP + 2 H2O. Its pathway is porphyrin-containing compound metabolism; bacteriochlorophyll biosynthesis (light-independent). Component of the dark-operative protochlorophyllide reductase (DPOR) that uses Mg-ATP and reduced ferredoxin to reduce ring D of protochlorophyllide (Pchlide) to form chlorophyllide a (Chlide). This reaction is light-independent. The NB-protein (BchN-BchB) is the catalytic component of the complex. This is Light-independent protochlorophyllide reductase subunit B from Chlorobium luteolum (strain DSM 273 / BCRC 81028 / 2530) (Pelodictyon luteolum).